The sequence spans 462 residues: MSSVKRTPKQEIVTQFHCSAAEGDIAKLTGILSHSPSLLNETSENGWTALMYAARNGHPEIVQFLLEKGCDRSIVNKSRQTALDIAVFWGYKHIANLLATAKGGKKPWFLTNEVEECENYFSKTLLDRKSEKRNNSDWLLAKESHPATVFILFSNLNPLVTLGGNKESFQQPEVRLCQLNYTDIKDYLAQPEKITLIFLGVELEIKDKLFNYAGEVPREEEDGLVAWFALGIDPIAAEEFKQRHENCYFLHPPMPALLQLKEKEAGVVAQARSVLAWYSRYKFCPTCGNATKIEEGGYKRVCLKEDCPSLNGVHNTSYPRVDPVVIMQVIHPDGTKCLLGRQKRFPPGMFTCLAGFIEPGETIEDAVRREVEEESGVKVGHVQYVACQPWPMPSSLMIGCLALAVSTEIKVDKNEIEDAHWFTREQVLDVLTKGKQQAFFVPPSRAIAHQLIKHWIRINPNL.

3 ANK repeats span residues 11–40 (EIVT…SLLN), 45–74 (NGWT…DRSI), and 78–98 (SRQT…ANLL). N6-succinyllysine is present on Lys-185. Residues Cys-284 and Cys-287 each contribute to the Zn(2+) site. Lys-292 bears the N6-succinyllysine mark. Zn(2+) is bound by residues Cys-302 and Cys-307. Substrate-binding positions include Tyr-318, 354-356 (AGF), Glu-370, Glu-374, and Glu-415. The Nudix hydrolase domain maps to 319–453 (PRVDPVVIMQ…SRAIAHQLIK (135 aa)). Residues Ala-354, Glu-370, Glu-374, and Glu-415 each contribute to the Mg(2+) site. Residues 355–376 (GFIEPGETIEDAVRREVEEESG) carry the Nudix box motif. A Microbody targeting signal motif is present at residues 460-462 (PNL).

The protein belongs to the Nudix hydrolase family. NudC subfamily. In terms of assembly, homodimer. Homodimerization is essential for its catalytic activity and protein stability. Interacts (via ANK repeats) with BLMH. Mg(2+) serves as cofactor. It depends on Zn(2+) as a cofactor.

It localises to the cytoplasm. Its subcellular location is the peroxisome. The protein resides in the cytoplasmic granule. It catalyses the reaction a 5'-end NAD(+)-phospho-ribonucleoside in mRNA + H2O = a 5'-end phospho-adenosine-phospho-ribonucleoside in mRNA + beta-nicotinamide D-ribonucleotide + 2 H(+). The enzyme catalyses NAD(+) + H2O = beta-nicotinamide D-ribonucleotide + AMP + 2 H(+). It carries out the reaction NADH + H2O = reduced beta-nicotinamide D-ribonucleotide + AMP + 2 H(+). The catalysed reaction is NADPH + H2O = reduced beta-nicotinamide D-ribonucleotide + adenosine 2',5'-bisphosphate + 2 H(+). Functionally, mRNA decapping enzyme that specifically removes the nicotinamide adenine dinucleotide (NAD) cap from a subset of mRNAs by hydrolyzing the diphosphate linkage to produce nicotinamide mononucleotide (NMN) and 5' monophosphate mRNA. The NAD-cap is present at the 5'-end of some RNAs; in contrast to the canonical N7 methylguanosine (m7G) cap, the NAD cap promotes mRNA decay. Preferentially acts on NAD-capped transcripts in response to nutrient stress. Also acts on free nicotinamide adenine dinucleotide molecules: hydrolyzes NAD(H) into NMN(H) and AMP, and NADPH into NMNH and 2',5'-ADP. May act to regulate the concentration of peroxisomal nicotinamide nucleotide cofactors required for oxidative metabolism in this organelle. Regulates the levels of circadian clock components PER1, PER2, PER3 and CRY2 in the liver. This chain is NAD-capped RNA hydrolase NUDT12, found in Pongo abelii (Sumatran orangutan).